The sequence spans 417 residues: Phosphoglycerate kinase (417 aa).

V23, D24, F25, N26, Q38, R39, S62, H63, G65, R66, L121, R122, H169, and R170 together coordinate (2R)-3-phosphoglycerate. ADP is bound at residue G213. A CDP-binding site is contributed by G213. Positions 214 and 215 each coordinate AMP. A214 is an ATP binding site. Position 214 (A214) interacts with Mg(2+). CDP is bound at residue D218. A Mg(2+)-binding site is contributed by D218. Position 219 (K219) interacts with AMP. Position 219 (K219) interacts with ATP. G237 is a binding site for ADP. G237 serves as a coordination point for CDP. Positions 238 and 312 each coordinate AMP. 2 residues coordinate ATP: G238 and G312. The CDP site is built by G337 and F342. F342 contributes to the ADP binding site. E343 provides a ligand contact to AMP. ATP-binding residues include E343, D374, and T375. Mg(2+) is bound at residue D374.

This sequence belongs to the phosphoglycerate kinase family. As to quaternary structure, monomer. The cofactor is Mg(2+).

It localises to the cytoplasm. The protein localises to the mitochondrion. It carries out the reaction (2R)-3-phosphoglycerate + ATP = (2R)-3-phospho-glyceroyl phosphate + ADP. The protein operates within carbohydrate degradation; glycolysis; pyruvate from D-glyceraldehyde 3-phosphate: step 2/5. Its function is as follows. Catalyzes one of the two ATP producing reactions in the glycolytic pathway via the reversible conversion of 1,3-diphosphoglycerate to 3-phosphoglycerate. Both L- and D- forms of purine and pyrimidine nucleotides can be used as substrates, but the activity is much lower on pyrimidines. Negatively regulates the biosynthesis of acetyl-CoA from pyruvate in the mitochondrion. In Yarrowia lipolytica (strain CLIB 122 / E 150) (Yeast), this protein is Phosphoglycerate kinase (PGK1).